Reading from the N-terminus, the 357-residue chain is Glutamine synthetase cytosolic isozyme (357 aa).

A GS beta-grasp domain is found at 20–100; that stretch reads VIAEYIWIGG…VICDAYSPNG (81 aa). In terms of domain architecture, GS catalytic spans 107–357; sequence KRAAAAKIFN…IAETTILWKP (251 aa).

Belongs to the glutamine synthetase family. As to quaternary structure, homooctamer.

Its subcellular location is the cytoplasm. The enzyme catalyses L-glutamate + NH4(+) + ATP = L-glutamine + ADP + phosphate + H(+). This chain is Glutamine synthetase cytosolic isozyme, found in Pinus sylvestris (Scotch pine).